The sequence spans 68 residues: Large ribosomal subunit protein bL35 (68 aa).

It belongs to the bacterial ribosomal protein bL35 family.

In Orientia tsutsugamushi (strain Ikeda) (Rickettsia tsutsugamushi), this protein is Large ribosomal subunit protein bL35.